Consider the following 437-residue polypeptide: Beta-1,3-galactosyl-O-glycosyl-glycoprotein beta-1,6-N-acetylglucosaminyltransferase 3 (437 aa).

The Cytoplasmic segment spans residues 1-12; sequence MTSWQRLCWHYR. The helical; Signal-anchor for type II membrane protein transmembrane segment at 13–30 threads the bilayer; the sequence is LWTLGCYMLLAILALKLS. Over 31 to 437 the chain is Lumenal; the sequence is LRLKCDFDAM…RHKAIYGTEL (407 aa). 4 disulfide bridges follow: cysteine 70–cysteine 227, cysteine 161–cysteine 381, cysteine 182–cysteine 209, and cysteine 390–cysteine 422. Asparagine 288 is a glycosylation site (N-linked (GlcNAc...) asparagine).

Belongs to the glycosyltransferase 14 family. In terms of processing, N-glycosylated.

It localises to the golgi apparatus membrane. It catalyses the reaction a 3-O-[beta-D-galactosyl-(1-&gt;3)-N-acetyl-alpha-D-galactosaminyl]-L-seryl-[protein] + UDP-N-acetyl-alpha-D-glucosamine = 3-O-{beta-D-galactosyl-(1-&gt;3)-[N-acetyl-beta-D-glucosaminyl-(1-&gt;6)]-N-acetyl-alpha-D-galactosaminyl}-L-seryl-[protein] + UDP + H(+). The enzyme catalyses a 3-O-[beta-D-galactosyl-(1-&gt;3)-N-acetyl-alpha-D-galactosaminyl]-L-threonyl-[protein] + UDP-N-acetyl-alpha-D-glucosamine = a 3-O-{beta-D-galactosyl-(1-&gt;3)-[N-acetyl-beta-D-glucosaminyl-(1-&gt;6)]-N-acetyl-alpha-D-galactosaminyl}-L-threonyl-[protein] + UDP + H(+). The catalysed reaction is a beta-D-Gal-(1-&gt;4)-beta-D-GlcNAc-(1-&gt;3)-beta-D-Gal-(1-&gt;4)-beta-D-GlcNAc derivative + UDP-N-acetyl-alpha-D-glucosamine = a beta-D-Gal-(1-&gt;4)-beta-D-GlcNAc-(1-&gt;3)-[beta-D-GlcNAc-(1-&gt;6)]-beta-D-Gal-(1-&gt;4)-N-acetyl-beta-D-glucosaminyl derivative + UDP + H(+). It carries out the reaction 3-O-[N-acetyl-beta-D-glucosaminyl-(1-&gt;3)-N-acetyl-alpha-D-galactosaminyl]-L-seryl-[protein] + UDP-N-acetyl-alpha-D-glucosamine = 3-O-[N-acetyl-beta-D-glucosaminyl-(1-&gt;3)-[N-acetyl-beta-D-glucosaminyl-(1-&gt;6)]-N-acetyl-alpha-D-galactosaminyl]-L-seryl-[protein] + UDP + H(+). It catalyses the reaction a 3-O-[N-acetyl-beta-D-glucosaminyl-(1-&gt;3)-N-acetyl-alpha-D-galactosaminyl]-L-threonyl-[protein] + UDP-N-acetyl-alpha-D-glucosamine = 3-O-[N-acetyl-beta-D-glucosaminyl-(1-&gt;3)-[N-acetyl-beta-D-glucosaminyl-(1-&gt;6)]-N-acetyl-alpha-D-galactosaminyl]-L-threonyl-[protein] + UDP + H(+). It participates in protein modification; protein glycosylation. Its function is as follows. Glycosyltransferase that can synthesize all known mucin beta 6 N-acetylglucosaminides. Mediates core 2 and core 4 O-glycan branching, 2 important steps in mucin-type biosynthesis. Also has I-branching enzyme activity by converting linear into branched poly-N-acetyllactosaminoglycans, leading to introduce the blood group I antigen during embryonic development. The sequence is that of Beta-1,3-galactosyl-O-glycosyl-glycoprotein beta-1,6-N-acetylglucosaminyltransferase 3 (Gcnt3) from Mus musculus (Mouse).